Here is a 681-residue protein sequence, read N- to C-terminus: Minichromosome maintenance domain-containing protein 2 (681 aa).

Position 292 is a phosphoserine (serine 292). The MCM domain maps to 533–621 (KQFTTEDFEK…LIAALLFEIS (89 aa)).

Plays an important role in meiotic recombination and associated DNA double-strand break repair. This chain is Minichromosome maintenance domain-containing protein 2 (Mcmdc2), found in Rattus norvegicus (Rat).